The sequence spans 341 residues: Dual oxidase maturation factor 1 (341 aa).

Residues 1–24 (MAALGHTLPFYTGTKPTFPMDTTL) are Extracellular-facing. Residues 25–45 (AVIITIFLTALVTFIIILPGI) form a helical membrane-spanning segment. Over 46 to 51 (RGKTRL) the chain is Cytoplasmic. A helical transmembrane segment spans residues 52–72 (FWLLRVVTSLFIGAVILAVNF). Topologically, residues 73-183 (SSEWSVGHVN…RLAGHYASAM (111 aa)) are extracellular. Residues Asn-84, Asn-109, and Asn-121 are each glycosylated (N-linked (GlcNAc...) asparagine). Residues 184-204 (LWVAFLCWLLANVMLSMPVLV) traverse the membrane as a helical segment. Tyr-205 is a topological domain (cytoplasmic). A helical membrane pass occupies residues 206 to 226 (GGHMLLATGLFQLLALFFFSM). Topologically, residues 227-249 (TTSLISPCPLRLGTAVLHTHHGP) are extracellular. The helical transmembrane segment at 250-270 (AFWITLATGLLCILLGLVMAV) threads the bilayer. Residues 271–341 (AHRMQPHRLK…EHPKESDCSL (71 aa)) lie on the Cytoplasmic side of the membrane.

The protein belongs to the DUOXA family. May interact with NUMB.

It is found in the membrane. Functionally, may be required for the maturation and the transport from the endoplasmic reticulum to the plasma membrane of functional DUOX1. This Mus musculus (Mouse) protein is Dual oxidase maturation factor 1 (Duoxa1).